A 152-amino-acid chain; its full sequence is Superoxide dismutase [Cu-Zn] (152 aa).

Cu cation contacts are provided by H45, H47, and H62. The disordered stretch occupies residues 61–87 (PHFNPAGKEHGAPEDENRHAGDLGNAT). Zn(2+) contacts are provided by H62, H70, H79, and D82. Over residues 67-81 (GKEHGAPEDENRHAG) the composition is skewed to basic and acidic residues. H119 contributes to the Cu cation binding site.

Belongs to the Cu-Zn superoxide dismutase family. Homodimer. It depends on Cu cation as a cofactor. Zn(2+) serves as cofactor.

The protein localises to the cytoplasm. It carries out the reaction 2 superoxide + 2 H(+) = H2O2 + O2. In terms of biological role, destroys radicals which are normally produced within the cells and which are toxic to biological systems. The chain is Superoxide dismutase [Cu-Zn] from Zingiber officinale (Ginger).